The sequence spans 194 residues: Peptidyl-tRNA hydrolase (194 aa).

Residue tyrosine 17 coordinates tRNA. Histidine 22 serves as the catalytic Proton acceptor. TRNA contacts are provided by phenylalanine 69, asparagine 71, and asparagine 117.

The protein belongs to the PTH family. As to quaternary structure, monomer.

It is found in the cytoplasm. It catalyses the reaction an N-acyl-L-alpha-aminoacyl-tRNA + H2O = an N-acyl-L-amino acid + a tRNA + H(+). Its function is as follows. Hydrolyzes ribosome-free peptidyl-tRNAs (with 1 or more amino acids incorporated), which drop off the ribosome during protein synthesis, or as a result of ribosome stalling. Catalyzes the release of premature peptidyl moieties from peptidyl-tRNA molecules trapped in stalled 50S ribosomal subunits, and thus maintains levels of free tRNAs and 50S ribosomes. This chain is Peptidyl-tRNA hydrolase, found in Renibacterium salmoninarum (strain ATCC 33209 / DSM 20767 / JCM 11484 / NBRC 15589 / NCIMB 2235).